Consider the following 58-residue polypeptide: Metallothionein-2B (58 aa).

The beta stretch occupies residues 1–29 (MPDPCCNDKCECKEGECKTGCKCKSCRCP). A divalent metal cation contacts are provided by C5, C6, C10, C12, C17, C21, C23, C26, C28, C31, C34, C38, C40, C46, C50, C54, C56, and C57. Residues 30–58 (PCDKCSSECKCTSKEECSKTCSKPCSCCP) form an alpha region.

The protein belongs to the metallothionein superfamily. Type 3 family.

In terms of biological role, binds six divalent metal ions. Known to bind copper and cadmium. The chain is Metallothionein-2B from Callinectes sapidus (Blue crab).